The following is a 95-amino-acid chain: MPSQMEHAMETMMLTFHRFAGEKNYLTKEDLRVLMEREFPGFLENQKDPLAVDKIMKDLDQCRDGKVGFQSFLSLVAGLIIACNDYFVVHMKQKK.

Residues K23, K28, K54, and K57 each carry the N6-acetyllysine modification. Residues 47-82 (KDPLAVDKIMKDLDQCRDGKVGFQSFLSLVAGLIIA) enclose the EF-hand domain. An ancestral calcium site region spans residues 60-71 (DQCRDGKVGFQS).

This sequence belongs to the S-100 family. Heterotetramer containing 2 light chains of S100A10/p11 and 2 heavy chains of ANXA2/p36. Interacts with SCN10A. Interacts with TASOR.

In terms of biological role, because S100A10 induces the dimerization of ANXA2/p36, it may function as a regulator of protein phosphorylation in that the ANXA2 monomer is the preferred target (in vitro) of tyrosine-specific kinase. The chain is Protein S100-A10 (S100a10) from Rattus norvegicus (Rat).